A 414-amino-acid chain; its full sequence is Lactosylceramide alpha-2,3-sialyltransferase (414 aa).

At Met1–Asp65 the chain is on the cytoplasmic side. The helical; Signal-anchor for type II membrane protein transmembrane segment at Ile66–Tyr86 threads the bilayer. The Lumenal segment spans residues Thr87–His414. Cys194 and Cys352 are joined by a disulfide. Asn235, Asn279, and Asn389 each carry an N-linked (GlcNAc...) asparagine glycan.

The protein belongs to the glycosyltransferase 29 family. Mainly expressed in brain, and then testis, heart and liver, almost all tissues showed some levels of the gene expression.

It is found in the golgi apparatus membrane. The enzyme catalyses a beta-D-Gal-(1-&gt;4)-beta-D-Glc-(1&lt;-&gt;1)-Cer(d18:1(4E)) + CMP-N-acetyl-beta-neuraminate = a ganglioside GM3 (d18:1(4E)) + CMP + H(+). It catalyses the reaction ganglioside GA2 (d18:1(4E)/18:0) + CMP-N-acetyl-beta-neuraminate = ganglioside GM2 (d18:1(4E)/18:0) + CMP + H(+). The catalysed reaction is a beta-D-Gal-(1&lt;-&gt;1')-ceramide + CMP-N-acetyl-beta-neuraminate = N-acetyl-alpha-neuraminosyl-(2-&gt;3)-beta-D-galactosyl-(1&lt;-&gt;1')-ceramide + CMP + H(+). It carries out the reaction ganglioside GA1 (d18:1(4E)/18:0) + CMP-N-acetyl-beta-neuraminate = ganglioside GM1 (d18:1(4E)/18:0) + CMP + H(+). Its function is as follows. (Microbial infection) Gangliosides GD1b and GT1b (derived from GM3) may serve as receptors for some C.botulinum neurotoxins (minimally types BoNT/A, B, C). In terms of biological role, transfers the sialyl group (N-acetyl-alpha-neuraminyl or NeuAc) from CMP-NeuAc to the non-reducing terminal galactose (Gal) of glycosphingolipids forming gangliosides (important molecules involved in the regulation of multiple cellular processes, including cell proliferation and differentiation, apoptosis, embryogenesis, development, and oncogenesis). Mainly involved in the biosynthesis of ganglioside GM3 but can also use different glycolipids as substrate acceptors such as D-galactosylceramide (GalCer), asialo-GM2 (GA2) and asialo-GM1 (GA1), although less preferentially than beta-D-Gal-(1-&gt;4)-beta-D-Glc-(1&lt;-&gt;1)-Cer (LacCer). The protein is Lactosylceramide alpha-2,3-sialyltransferase (St3gal5) of Mus musculus (Mouse).